The primary structure comprises 430 residues: Glutamate-1-semialdehyde 2,1-aminomutase (430 aa).

K268 is modified (N6-(pyridoxal phosphate)lysine).

The protein belongs to the class-III pyridoxal-phosphate-dependent aminotransferase family. HemL subfamily. Pyridoxal 5'-phosphate is required as a cofactor.

It localises to the cytoplasm. The enzyme catalyses (S)-4-amino-5-oxopentanoate = 5-aminolevulinate. The protein operates within porphyrin-containing compound metabolism; protoporphyrin-IX biosynthesis; 5-aminolevulinate from L-glutamyl-tRNA(Glu): step 2/2. The protein is Glutamate-1-semialdehyde 2,1-aminomutase of Methanopyrus kandleri (strain AV19 / DSM 6324 / JCM 9639 / NBRC 100938).